Consider the following 479-residue polypeptide: Ribosomal RNA small subunit methyltransferase F (479 aa).

S-adenosyl-L-methionine is bound by residues 125–131 (AAAPGSK), glutamate 149, aspartate 176, and aspartate 194. Cysteine 247 (nucleophile) is an active-site residue.

This sequence belongs to the class I-like SAM-binding methyltransferase superfamily. RsmB/NOP family.

Its subcellular location is the cytoplasm. It catalyses the reaction cytidine(1407) in 16S rRNA + S-adenosyl-L-methionine = 5-methylcytidine(1407) in 16S rRNA + S-adenosyl-L-homocysteine + H(+). Specifically methylates the cytosine at position 1407 (m5C1407) of 16S rRNA. This Salmonella enteritidis PT4 (strain P125109) protein is Ribosomal RNA small subunit methyltransferase F.